The following is a 382-amino-acid chain: DNA double-strand break repair protein Mre11 (382 aa).

Mn(2+) contacts are provided by D8, H10, D49, and D84. H85 (proton donor) is an active-site residue. Mn(2+) is bound by residues H156, H187, and H189.

The protein belongs to the MRE11/RAD32 family. As to quaternary structure, homodimer. Forms a heterotetramer composed of two Mre11 subunits and two Rad50 subunits. Interacts with Rad50 and HerA. Mn(2+) serves as cofactor.

Its activity is regulated as follows. Nuclease activity is regulated by Rad50. Functionally, part of the Rad50/Mre11 complex, which is involved in the early steps of DNA double-strand break (DSB) repair. The complex may facilitate opening of the processed DNA ends to aid in the recruitment of HerA and NurA. Mre11 binds to DSB ends and has both double-stranded 3'-5' exonuclease activity and single-stranded endonuclease activity. Recruited immediately to chromosomal DNA after gamma irradiation, and remains DNA bound in the course of DNA repair. The sequence is that of DNA double-strand break repair protein Mre11 from Sulfolobus acidocaldarius (strain ATCC 33909 / DSM 639 / JCM 8929 / NBRC 15157 / NCIMB 11770).